The chain runs to 183 residues: Ribosome rescue factor SmrB (183 aa).

The region spanning 98–173 (LDLHGLTQLQ…GDAALLVLIE (76 aa)) is the Smr domain.

This sequence belongs to the SmrB family. In terms of assembly, associates with collided ribosomes, but not with correctly translating polysomes.

Acts as a ribosome collision sensor. Detects stalled/collided disomes (pairs of ribosomes where the leading ribosome is stalled and a second ribosome has collided with it) and endonucleolytically cleaves mRNA at the 5' boundary of the stalled ribosome. Stalled/collided disomes form a new interface (primarily via the 30S subunits) that binds SmrB. Cleaved mRNA becomes available for tmRNA ligation, leading to ribosomal subunit dissociation and rescue of stalled ribosomes. The polypeptide is Ribosome rescue factor SmrB (Salmonella agona (strain SL483)).